Reading from the N-terminus, the 298-residue chain is Release factor glutamine methyltransferase (298 aa).

S-adenosyl-L-methionine-binding positions include 131-135 (GTGTG), Asp-162, Trp-189, and Asn-205. 205–208 (NPPY) serves as a coordination point for substrate.

This sequence belongs to the protein N5-glutamine methyltransferase family. PrmC subfamily.

The enzyme catalyses L-glutaminyl-[peptide chain release factor] + S-adenosyl-L-methionine = N(5)-methyl-L-glutaminyl-[peptide chain release factor] + S-adenosyl-L-homocysteine + H(+). Its function is as follows. Methylates the class 1 translation termination release factors RF1/PrfA and RF2/PrfB on the glutamine residue of the universally conserved GGQ motif. The sequence is that of Release factor glutamine methyltransferase from Pasteurella multocida (strain Pm70).